A 143-amino-acid chain; its full sequence is Large-conductance mechanosensitive channel (143 aa).

The next 3 membrane-spanning stretches (helical) occupy residues 16 to 36 (VMDLAVGVIIGGAFSGITNSL), 40 to 60 (IIMPIVAFIAGGELNFKNMFI), and 87 to 107 (GSFITVLINFLILAFIIFMMV).

The protein belongs to the MscL family. Homopentamer.

It localises to the cell inner membrane. Functionally, channel that opens in response to stretch forces in the membrane lipid bilayer. May participate in the regulation of osmotic pressure changes within the cell. This chain is Large-conductance mechanosensitive channel, found in Psychrobacter sp. (strain PRwf-1).